A 450-amino-acid chain; its full sequence is tRNA modification GTPase MnmE (450 aa).

Residues Arg20, Glu78, and Lys117 each coordinate (6S)-5-formyl-5,6,7,8-tetrahydrofolate. A TrmE-type G domain is found at 211–372 (GLRMVIVGKP…LEESIYRETQ (162 aa)). Asn221 is a binding site for K(+). GTP-binding positions include 221–226 (NVGKST), 240–246 (TDIPGTT), and 265–268 (DTAG). Mg(2+) is bound at residue Ser225. Positions 240, 242, and 245 each coordinate K(+). Thr246 serves as a coordination point for Mg(2+). Lys450 provides a ligand contact to (6S)-5-formyl-5,6,7,8-tetrahydrofolate.

Belongs to the TRAFAC class TrmE-Era-EngA-EngB-Septin-like GTPase superfamily. TrmE GTPase family. As to quaternary structure, homodimer. Heterotetramer of two MnmE and two MnmG subunits. K(+) is required as a cofactor.

The protein localises to the cytoplasm. In terms of biological role, exhibits a very high intrinsic GTPase hydrolysis rate. Involved in the addition of a carboxymethylaminomethyl (cmnm) group at the wobble position (U34) of certain tRNAs, forming tRNA-cmnm(5)s(2)U34. This is tRNA modification GTPase MnmE from Thermotoga sp. (strain RQ2).